The sequence spans 490 residues: Cytochrome P450 2C50 (490 aa).

Ser127 is modified (phosphoserine). 2 positions are modified to N6-acetyllysine: Lys249 and Lys375. Residue Cys435 participates in heme binding.

The protein belongs to the cytochrome P450 family. Heme serves as cofactor. Expressed in heart and liver.

The protein resides in the endoplasmic reticulum membrane. The protein localises to the microsome membrane. It carries out the reaction an organic molecule + reduced [NADPH--hemoprotein reductase] + O2 = an alcohol + oxidized [NADPH--hemoprotein reductase] + H2O + H(+). Metabolizes arachidonic acid to several midchain and omega-terminal hydroxyeicosatetraenoic acids (HETE). The polypeptide is Cytochrome P450 2C50 (Mus musculus (Mouse)).